A 454-amino-acid chain; its full sequence is tRNA modification GTPase MnmE (454 aa).

(6S)-5-formyl-5,6,7,8-tetrahydrofolate is bound by residues Arg23, Glu80, and Lys120. The 162-residue stretch at 216 to 377 (GMKVVIAGRP…LRDHLKQSMG (162 aa)) folds into the TrmE-type G domain. Asn226 serves as a coordination point for K(+). Residues 226-231 (NAGKSS), 245-251 (TDIAGTT), 270-273 (DTAG), 335-338 (NKAD), and 358-360 (SAR) contribute to the GTP site. Residue Ser230 participates in Mg(2+) binding. The K(+) site is built by Thr245, Ile247, and Thr250. Thr251 lines the Mg(2+) pocket. Residue Lys454 participates in (6S)-5-formyl-5,6,7,8-tetrahydrofolate binding.

It belongs to the TRAFAC class TrmE-Era-EngA-EngB-Septin-like GTPase superfamily. TrmE GTPase family. As to quaternary structure, homodimer. Heterotetramer of two MnmE and two MnmG subunits. K(+) serves as cofactor.

The protein resides in the cytoplasm. Its function is as follows. Exhibits a very high intrinsic GTPase hydrolysis rate. Involved in the addition of a carboxymethylaminomethyl (cmnm) group at the wobble position (U34) of certain tRNAs, forming tRNA-cmnm(5)s(2)U34. This is tRNA modification GTPase MnmE from Yersinia pseudotuberculosis serotype IB (strain PB1/+).